The chain runs to 159 residues: Large ribosomal subunit protein uL11 (159 aa).

It belongs to the universal ribosomal protein uL11 family. In terms of assembly, part of the ribosomal stalk of the 50S ribosomal subunit. Interacts with L10 and the large rRNA to form the base of the stalk. L10 forms an elongated spine to which L12 dimers bind in a sequential fashion forming a multimeric L10(L12)X complex.

In terms of biological role, forms part of the ribosomal stalk which helps the ribosome interact with GTP-bound translation factors. The chain is Large ribosomal subunit protein uL11 from Methanococcus maripaludis (strain C6 / ATCC BAA-1332).